The sequence spans 188 residues: Large ribosomal subunit protein eL18 (188 aa).

Residues 153–188 (GKAPGTPHSHTKPYVRSKGRKFERARGRRASCGYKN) are disordered. Positions 161-171 (SHTKPYVRSKG) are enriched in basic residues.

This sequence belongs to the eukaryotic ribosomal protein eL18 family. Component of the large ribosomal subunit.

The protein resides in the cytoplasm. Its subcellular location is the cytosol. The protein localises to the rough endoplasmic reticulum. In terms of biological role, component of the large ribosomal subunit. The ribosome is a large ribonucleoprotein complex responsible for the synthesis of proteins in the cell. The protein is Large ribosomal subunit protein eL18 (rpl18) of Oreochromis mossambicus (Mozambique tilapia).